We begin with the raw amino-acid sequence, 470 residues long: Cysteine--tRNA ligase (470 aa).

C46 is a binding site for Zn(2+). The 'HIGH' region motif lies at 48-58 (PTVYDLAHIGN). Residues C230, H255, and E259 each coordinate Zn(2+). The 'KMSKS' region signature appears at 288 to 292 (KMSKS). K291 provides a ligand contact to ATP.

The protein belongs to the class-I aminoacyl-tRNA synthetase family. As to quaternary structure, monomer. Requires Zn(2+) as cofactor.

It is found in the cytoplasm. The catalysed reaction is tRNA(Cys) + L-cysteine + ATP = L-cysteinyl-tRNA(Cys) + AMP + diphosphate. The sequence is that of Cysteine--tRNA ligase from Granulibacter bethesdensis (strain ATCC BAA-1260 / CGDNIH1).